Consider the following 225-residue polypeptide: Phosphoribosylformylglycinamidine synthase subunit PurQ (225 aa).

Positions Arg-4–Ala-225 constitute a Glutamine amidotransferase type-1 domain. Cys-87 functions as the Nucleophile in the catalytic mechanism. Residues His-196 and Glu-198 contribute to the active site.

In terms of assembly, part of the FGAM synthase complex composed of 1 PurL, 1 PurQ and 2 PurS subunits.

Its subcellular location is the cytoplasm. The catalysed reaction is N(2)-formyl-N(1)-(5-phospho-beta-D-ribosyl)glycinamide + L-glutamine + ATP + H2O = 2-formamido-N(1)-(5-O-phospho-beta-D-ribosyl)acetamidine + L-glutamate + ADP + phosphate + H(+). It carries out the reaction L-glutamine + H2O = L-glutamate + NH4(+). It participates in purine metabolism; IMP biosynthesis via de novo pathway; 5-amino-1-(5-phospho-D-ribosyl)imidazole from N(2)-formyl-N(1)-(5-phospho-D-ribosyl)glycinamide: step 1/2. Part of the phosphoribosylformylglycinamidine synthase complex involved in the purines biosynthetic pathway. Catalyzes the ATP-dependent conversion of formylglycinamide ribonucleotide (FGAR) and glutamine to yield formylglycinamidine ribonucleotide (FGAM) and glutamate. The FGAM synthase complex is composed of three subunits. PurQ produces an ammonia molecule by converting glutamine to glutamate. PurL transfers the ammonia molecule to FGAR to form FGAM in an ATP-dependent manner. PurS interacts with PurQ and PurL and is thought to assist in the transfer of the ammonia molecule from PurQ to PurL. The chain is Phosphoribosylformylglycinamidine synthase subunit PurQ from Rhodococcus jostii (strain RHA1).